The chain runs to 259 residues: Global transcriptional regulator CodY (259 aa).

The tract at residues 1–155 (MNLLEKTRKI…GATVVGMEIL (155 aa)) is GAF domain. The segment at residues 203-222 (ASKIADRVGITRSVIVNALR) is a DNA-binding region (H-T-H motif). Residue Ser-215 is modified to Phosphoserine.

This sequence belongs to the CodY family.

The protein resides in the cytoplasm. In terms of biological role, DNA-binding global transcriptional regulator which is involved in the adaptive response to starvation and acts by directly or indirectly controlling the expression of numerous genes in response to nutrient availability. During rapid exponential growth, CodY is highly active and represses genes whose products allow adaptation to nutrient depletion. The protein is Global transcriptional regulator CodY of Anoxybacillus flavithermus (strain DSM 21510 / WK1).